Reading from the N-terminus, the 514-residue chain is ATP synthase subunit alpha (514 aa).

G170–T177 is a binding site for ATP.

It belongs to the ATPase alpha/beta chains family. In terms of assembly, F-type ATPases have 2 components, CF(1) - the catalytic core - and CF(0) - the membrane proton channel. CF(1) has five subunits: alpha(3), beta(3), gamma(1), delta(1), epsilon(1). CF(0) has three main subunits: a(1), b(2) and c(9-12). The alpha and beta chains form an alternating ring which encloses part of the gamma chain. CF(1) is attached to CF(0) by a central stalk formed by the gamma and epsilon chains, while a peripheral stalk is formed by the delta and b chains.

It localises to the cell inner membrane. The catalysed reaction is ATP + H2O + 4 H(+)(in) = ADP + phosphate + 5 H(+)(out). Produces ATP from ADP in the presence of a proton gradient across the membrane. The alpha chain is a regulatory subunit. In Psychrobacter arcticus (strain DSM 17307 / VKM B-2377 / 273-4), this protein is ATP synthase subunit alpha.